The sequence spans 583 residues: ATP-dependent lipid A-core flippase (583 aa).

The next 5 helical transmembrane spans lie at 27-47, 69-89, 142-162, 165-185, and 249-269; these read LAVA…MVSL, LLVF…TYCL, ALVS…LMFY, WQLS…IGFV, and AAAN…VLYL. The region spanning 28-310 is the ABC transmembrane type-1 domain; the sequence is AVAVVALIIN…LTNVTSQFQR (283 aa). An ABC transporter domain is found at 342-578; it reads VNVKDISFTY…DGAYAQLHRI (237 aa). Residue 376 to 383 coordinates ATP; it reads GRSGSGKS.

The protein belongs to the ABC transporter superfamily. Lipid exporter (TC 3.A.1.106) family. In terms of assembly, homodimer.

It localises to the cell inner membrane. It carries out the reaction ATP + H2O + lipid A-core oligosaccharideSide 1 = ADP + phosphate + lipid A-core oligosaccharideSide 2.. In terms of biological role, involved in lipopolysaccharide (LPS) biosynthesis. Translocates lipid A-core from the inner to the outer leaflet of the inner membrane. Transmembrane domains (TMD) form a pore in the inner membrane and the ATP-binding domain (NBD) is responsible for energy generation. The protein is ATP-dependent lipid A-core flippase of Vibrio vulnificus (strain CMCP6).